A 228-amino-acid polypeptide reads, in one-letter code: Urease accessory protein UreG (228 aa).

GTP is bound at residue glycine 34 to threonine 41.

It belongs to the SIMIBI class G3E GTPase family. UreG subfamily. As to quaternary structure, homodimer. UreD, UreF and UreG form a complex that acts as a GTP-hydrolysis-dependent molecular chaperone, activating the urease apoprotein by helping to assemble the nickel containing metallocenter of UreC. The UreE protein probably delivers the nickel.

The protein resides in the cytoplasm. Functionally, facilitates the functional incorporation of the urease nickel metallocenter. This process requires GTP hydrolysis, probably effectuated by UreG. This is Urease accessory protein UreG from Rhodococcus opacus (strain B4).